A 306-amino-acid chain; its full sequence is Nucleotide-binding protein RSal33209_2275 (306 aa).

29–36 serves as a coordination point for ATP; that stretch reads GMSGAGRS. 80 to 83 is a GTP binding site; that stretch reads DVRG.

The protein belongs to the RapZ-like family.

Displays ATPase and GTPase activities. The protein is Nucleotide-binding protein RSal33209_2275 of Renibacterium salmoninarum (strain ATCC 33209 / DSM 20767 / JCM 11484 / NBRC 15589 / NCIMB 2235).